The chain runs to 436 residues: Hydroxycinnamoyltransferase (436 aa).

Catalysis depends on proton acceptor residues His154 and Asp383.

This sequence belongs to the plant acyltransferase family. As to expression, mostly expressed in stems, and, to a lower extent, in bulbs.

It participates in phenylpropanoid metabolism. In terms of biological role, hydroxycinnamoyl transferase that catalyzes the transfer of an acyl from p-coumaryol-CoA to various acyl acceptors. Can use feruloyl-CoA and caffeoyl-CoA as acyl donors. The chain is Hydroxycinnamoyltransferase from Narcissus pseudonarcissus (Daffodil).